Here is a 214-residue protein sequence, read N- to C-terminus: Osteoclast-stimulating factor 1 (214 aa).

An SH3 domain is found at 12–71; the sequence is GQVKVYRALFTFDPRTPDELYFEEGDILYISDTSDSNWWKGTCRGRTGLIPSNYVAEQAE. ANK repeat units lie at residues 72–101, 105–135, and 139–168; these read SIDN…GING, AGNT…ELNQ, and LGDT…RTDV.

The protein resides in the cytoplasm. Its function is as follows. Induces bone resorption, acting probably through a signaling cascade which results in the secretion of factor(s) enhancing osteoclast formation and activity. The chain is Osteoclast-stimulating factor 1 (ostf1) from Danio rerio (Zebrafish).